A 67-amino-acid chain; its full sequence is MPKLKTKSAVKKRFKFTATGKVIASQAGKKHFMRRRTKAQIRNLRGTTILCPQDGHNIKKYFLPYGI.

This sequence belongs to the bacterial ribosomal protein bL35 family.

This is Large ribosomal subunit protein bL35 from Rickettsia prowazekii (strain Madrid E).